The chain runs to 217 residues: Chorionic somatomammotropin hormone 1 (217 aa).

The signal sequence occupies residues 1–26 (MAPGSRTSLLLAFALLCLPWLQEAGA). His44 is a Zn(2+) binding site. The cysteines at positions 79 and 191 are disulfide-linked. Glu200 contacts Zn(2+). Cys208 and Cys215 are disulfide-bonded.

It belongs to the somatotropin/prolactin family. In terms of assembly, can be found in a monomeric as well as dimeric form.

It localises to the secreted. Produced only during pregnancy and is involved in stimulating lactation, fetal growth and metabolism. Does not interact with GHR but only activates PRLR through zinc-induced dimerization. This is Chorionic somatomammotropin hormone 1 (CSH1) from Homo sapiens (Human).